An 869-amino-acid polypeptide reads, in one-letter code: Mismatch repair endonuclease PMS2 (869 aa).

ATP is bound by residues N44, D69, E108, A109, and L110. Residues 585 to 588 carry the Nuclear localization signal motif; that stretch reads RRFK.

Belongs to the DNA mismatch repair MutL/HexB family.

It is found in the nucleus. The catalysed reaction is ATP + H2O = ADP + phosphate + H(+). Its function is as follows. Component of the post-replicative DNA mismatch repair system (MMR). Involved in B cell growth by positively regulating B cell proliferation and controlling replication efficiency. Controls cell cycle to prevent re-replication and defects in DNA damage-induced G2 checkpoint. Doesn't seem to counteract or control the immunoglobulin gene conversion (Ig GC) and to contribute to guanine/uracil mismatch repair. Possesses an ATPase activity, but in the absence of gross structural changes, ATP hydrolysis may not be necessary for proficient mismatch repair. This is Mismatch repair endonuclease PMS2 from Gallus gallus (Chicken).